The following is a 341-amino-acid chain: Uroporphyrinogen decarboxylase (341 aa).

Substrate contacts are provided by residues 23 to 27 (RQAGR), Asp-73, Tyr-148, Ser-203, and His-318.

The protein belongs to the uroporphyrinogen decarboxylase family. In terms of assembly, homodimer.

It localises to the cytoplasm. It carries out the reaction uroporphyrinogen III + 4 H(+) = coproporphyrinogen III + 4 CO2. The protein operates within porphyrin-containing compound metabolism; protoporphyrin-IX biosynthesis; coproporphyrinogen-III from 5-aminolevulinate: step 4/4. Functionally, catalyzes the decarboxylation of four acetate groups of uroporphyrinogen-III to yield coproporphyrinogen-III. In Brucella suis (strain ATCC 23445 / NCTC 10510), this protein is Uroporphyrinogen decarboxylase.